Consider the following 218-residue polypeptide: Large ribosomal subunit protein uL3 (218 aa).

Residues 121–163 form a disordered region; that stretch reads GYQKRHGFSRGPMTHGSKNHREPGSIGPGTTPGRIYPGKRMAG.

This sequence belongs to the universal ribosomal protein uL3 family. As to quaternary structure, part of the 50S ribosomal subunit. Forms a cluster with proteins L14 and L19.

Its function is as follows. One of the primary rRNA binding proteins, it binds directly near the 3'-end of the 23S rRNA, where it nucleates assembly of the 50S subunit. The sequence is that of Large ribosomal subunit protein uL3 from Parasynechococcus marenigrum (strain WH8102).